A 66-amino-acid chain; its full sequence is Large ribosomal subunit protein bL35 (66 aa).

The protein belongs to the bacterial ribosomal protein bL35 family.

This Rhodopseudomonas palustris (strain BisB18) protein is Large ribosomal subunit protein bL35.